We begin with the raw amino-acid sequence, 441 residues long: Ribosomal protein uS12 methylthiotransferase RimO (441 aa).

In terms of domain architecture, MTTase N-terminal spans 5 to 116 (PTIAFTHLGC…IVDVMQRVEK (112 aa)). [4Fe-4S] cluster contacts are provided by Cys-14, Cys-50, Cys-79, Cys-154, Cys-158, and Cys-161. The Radical SAM core domain occupies 140-370 (TTSEGVAYVR…EVQQSISWQQ (231 aa)). In terms of domain architecture, TRAM spans 372–438 (QKLVGQLVDV…IYDLYGCLIS (67 aa)).

It belongs to the methylthiotransferase family. RimO subfamily. The cofactor is [4Fe-4S] cluster.

The protein resides in the cytoplasm. It catalyses the reaction L-aspartate(89)-[ribosomal protein uS12]-hydrogen + (sulfur carrier)-SH + AH2 + 2 S-adenosyl-L-methionine = 3-methylsulfanyl-L-aspartate(89)-[ribosomal protein uS12]-hydrogen + (sulfur carrier)-H + 5'-deoxyadenosine + L-methionine + A + S-adenosyl-L-homocysteine + 2 H(+). Its function is as follows. Catalyzes the methylthiolation of an aspartic acid residue of ribosomal protein uS12. The chain is Ribosomal protein uS12 methylthiotransferase RimO from Trichodesmium erythraeum (strain IMS101).